Consider the following 286-residue polypeptide: MVAKILDGKQIAKDYRQGLQNQVEALKEKGFTPKLSVILVGNDGASQSYVRSKKKAAEKIGMISEIVHLEETATEEEVLNELNRLNNDDSVSGILVQVPLPKQVSEQKILEAINPDKDVDGFHPINIGKLYIDEQTFVPCTPLGIMEILKHADIDLEGKNAVVIGRSHIVGQPVSKLLLQKNASVTILHSRSKDMASYLKDADVIVSAVGKPGLVTKDVVKEGAVIIDVGNTPDENGKLKGDVDYDAVKEIAGAITPVPGGVGPLTITMVLNNTLLAEKMRRGIDS.

Residues 165–167 (GRS) and serine 190 contribute to the NADP(+) site.

The protein belongs to the tetrahydrofolate dehydrogenase/cyclohydrolase family. In terms of assembly, homodimer.

It carries out the reaction (6R)-5,10-methylene-5,6,7,8-tetrahydrofolate + NADP(+) = (6R)-5,10-methenyltetrahydrofolate + NADPH. The catalysed reaction is (6R)-5,10-methenyltetrahydrofolate + H2O = (6R)-10-formyltetrahydrofolate + H(+). The protein operates within one-carbon metabolism; tetrahydrofolate interconversion. In terms of biological role, catalyzes the oxidation of 5,10-methylenetetrahydrofolate to 5,10-methenyltetrahydrofolate and then the hydrolysis of 5,10-methenyltetrahydrofolate to 10-formyltetrahydrofolate. The sequence is that of Bifunctional protein FolD from Staphylococcus aureus (strain MRSA252).